Reading from the N-terminus, the 1978-residue chain is Centrosomal protein Cep290 (1978 aa).

A necessary and sufficient for function in ciliogenesis, transition zone (TZ) assembly, and recruitment of DZP1 and Mks1 to the TZ. Also required for subcellular localization to the cilium basal body region spans residues 1–650 (MSMDIPETVS…SLCEVPEIAE (650 aa)). Coiled-coil stretches lie at residues 76–384 (DRRL…KSQQ) and 471–505 (IERL…LQQD). The disordered stretch occupies residues 271 to 296 (QLEGKSISSGQTNSSNSQSQQEEEHA). Residues 276-290 (SISSGQTNSSNSQSQ) show a composition bias toward low complexity. The tract at residues 663 to 688 (ATRPSSPTEATMGLRRPTVPDPEEKP) is disordered. 3 coiled-coil regions span residues 853–887 (FEEQ…ANEQ), 922–970 (LAKV…TQQD), and 1192–1233 (ADAV…SRSE). The span at 1313–1324 (KEKLRQKPEVPV) shows a compositional bias: basic and acidic residues. The tract at residues 1313 to 1397 (KEKLRQKPEV…EKQDTEELKE (85 aa)) is disordered. The segment covering 1329–1341 (STDSRSSSSSDSS) has biased composition (low complexity). The span at 1379–1391 (VTEEPEGEEEKQD) shows a compositional bias: acidic residues. Coiled coils occupy residues 1405–1439 (IKDL…CQER) and 1501–1654 (LNRT…LESK). 2 disordered regions span residues 1684–1714 (VGVS…AHHH) and 1859–1884 (LKDG…RLQQ). Positions 1693 to 1708 (PSESPETYTGPSSECS) are enriched in polar residues. Positions 1726–1935 (IEALKSRIEL…KEQLVKKTQL (210 aa)) form a coiled coil.

Interacts (via N-terminus) with DZIP1. As to expression, expressed in sensory neurons type I and in germ cells (at protein level).

The protein resides in the cytoplasm. It localises to the cytoskeleton. Its subcellular location is the cilium basal body. The protein localises to the microtubule organizing center. It is found in the centrosome. The protein resides in the centriole. In terms of biological role, essential for ciliogenesis in sensory neurons and spermatocytes. During neuron and spermatocyte ciliogenesis, essential for initiating transition zone (TZ) assembly and is required for the formation of diverse connections between microtubules and between microtubules and the membrane. Regulates TZ assembly by recruiting DZIP1 to the plasma membrane where it promotes early ciliary membrane formation resulting in the initiation of TZ assembly. In Drosophila melanogaster (Fruit fly), this protein is Centrosomal protein Cep290.